Here is a 419-residue protein sequence, read N- to C-terminus: MMSMNSKQPHFAMHPTLPEHKYPSLHSSSEAIRRACLPTPPLQSNLFASLDETLLARAEALAAVDIAVSQGKSHPFKPDATYHTMNSVPCTSTSTVPLAHHHHHHHHHQALEPGDLLDHISSPSLALMAGAGGAGAAAGGGGAHDGPGGGGGPGGGGGPGGGPGGGGGGGPGGGGGGPGGGLLGGSAHPHPHMHSLGHLSHPAAAAAMNMPSGLPHPGLVAAAAHHGAAAAAAAAAAGQVAAASAAAAVVGAAGLASICDSDTDPRELEAFAERFKQRRIKLGVTQADVGSALANLKIPGVGSLSQSTICRFESLTLSHNNMIALKPILQAWLEEAEGAQREKMNKPELFNGGEKKRKRTSIAAPEKRSLEAYFAVQPRPSSEKIAAIAEKLDLKKNVVRVWFCNQRQKQKRMKFSATY.

A POU-IV box motif is present at residues 57–66 (RAEALAAVDI). Disordered stretches follow at residues 94 to 117 (STVP…GDLL) and 131 to 197 (AGGA…HSLG). Positions 99–108 (AHHHHHHHHH) are enriched in basic residues. Positions 131-184 (AGGAGAAAGGGGAHDGPGGGGGPGGGGGPGGGPGGGGGGGPGGGGGGPGGGLLG) are enriched in gly residues. Residues 261–338 (SDTDPRELEA…LQAWLEEAEG (78 aa)) form the POU-specific domain. Residues 356–415 (KRKRTSIAAPEKRSLEAYFAVQPRPSSEKIAAIAEKLDLKKNVVRVWFCNQRQKQKRMKF) constitute a DNA-binding region (homeobox).

The protein belongs to the POU transcription factor family. Class-4 subfamily. Interacts (via N-terminus) with RIT2; the interaction controls POU4F1 transactivation activity on some neuronal target genes. Isoform 1 interacts with POU4F2; this interaction inhibits both POU4F1 DNA-binding and transcriptional activities. Isoform 1 interacts (C-terminus) with ESR1 (via DNA-binding domain); this interaction decreases the estrogen receptor ESR1 transcriptional activity in a DNA- and ligand 17-beta-estradiol-independent manner. Expressed in the brain and the retina. Present in the developing brain, spinal cord and eye.

The protein resides in the nucleus. It localises to the cytoplasm. Functionally, multifunctional transcription factor with different regions mediating its different effects. Acts by binding (via its C-terminal domain) to sequences related to the consensus octamer motif 5'-ATGCAAAT-3' in the regulatory regions of its target genes. Regulates the expression of specific genes involved in differentiation and survival within a subset of neuronal lineages. It has been shown that activation of some of these genes requires its N-terminal domain, maybe through a neuronal-specific cofactor. Activates BCL2 expression and protects neuronal cells from apoptosis (via the N-terminal domain). Induces neuronal process outgrowth and the coordinate expression of genes encoding synaptic proteins. Exerts its major developmental effects in somatosensory neurons and in brainstem nuclei involved in motor control. Stimulates the binding affinity of the nuclear estrogene receptor ESR1 to DNA estrogen response element (ERE), and hence modulates ESR1-induced transcriptional activity. May positively regulate POU4F2 and POU4F3. Regulates dorsal root ganglion sensory neuron specification and axonal projection into the spinal cord. Plays a role in TNFSF11-mediated terminal osteoclast differentiation. Negatively regulates its own expression interacting directly with a highly conserved autoregulatory domain surrounding the transcription initiation site. Its function is as follows. Able to act as transcription factor, cannot regulate the expression of the same subset of genes than isoform 1. Does not have antiapoptotic effect on neuronal cells. The polypeptide is POU domain, class 4, transcription factor 1 (Homo sapiens (Human)).